A 118-amino-acid polypeptide reads, in one-letter code: Large ribosomal subunit protein uL24 (118 aa).

Belongs to the universal ribosomal protein uL24 family. Part of the 50S ribosomal subunit.

In terms of biological role, one of two assembly initiator proteins, it binds directly to the 5'-end of the 23S rRNA, where it nucleates assembly of the 50S subunit. Functionally, one of the proteins that surrounds the polypeptide exit tunnel on the outside of the subunit. This chain is Large ribosomal subunit protein uL24, found in Prochlorococcus marinus (strain NATL2A).